We begin with the raw amino-acid sequence, 1222 residues long: ATP-dependent helicase/nuclease subunit A (1222 aa).

Positions 39-495 constitute a UvrD-like helicase ATP-binding domain; that stretch reads QKRTAQQIEA…ILLKENFRSQ (457 aa). 60–67 is a binding site for ATP; sequence ASAGSGKT. Residues 524–810 enclose the UvrD-like helicase C-terminal domain; it reads QLIAGSHAQT…NLMTIHKSKG (287 aa).

Belongs to the helicase family. AddA subfamily. Heterodimer of AddA and AddB/RexB. It depends on Mg(2+) as a cofactor.

It carries out the reaction Couples ATP hydrolysis with the unwinding of duplex DNA by translocating in the 3'-5' direction.. The enzyme catalyses ATP + H2O = ADP + phosphate + H(+). Functionally, the heterodimer acts as both an ATP-dependent DNA helicase and an ATP-dependent, dual-direction single-stranded exonuclease. Recognizes the chi site generating a DNA molecule suitable for the initiation of homologous recombination. The AddA nuclease domain is required for chi fragment generation; this subunit has the helicase and 3' -&gt; 5' nuclease activities. The chain is ATP-dependent helicase/nuclease subunit A from Streptococcus pyogenes serotype M6 (strain ATCC BAA-946 / MGAS10394).